A 131-amino-acid chain; its full sequence is Spermatocyte protein spe-27 (131 aa).

The first 17 residues, 1–17 (MNKSLIFLLSFAYSCYS), serve as a signal peptide directing secretion.

Its function is as follows. Required for spermiogenesis. The sequence is that of Spermatocyte protein spe-27 (spe-27) from Caenorhabditis elegans.